We begin with the raw amino-acid sequence, 1742 residues long: Unconventional myosin-Vc (1742 aa).

Ala2 is subject to N-acetylalanine. The 55-residue stretch at 8-62 (TQYNRVWIPDPEEVWKSAEIAKDYRVGDKVLRLLLEDGTELDYSVNPESLPPLRN) folds into the Myosin N-terminal SH3-like domain. The region spanning 67 to 753 (VGENDLTALS…QVAYLEKLRL (687 aa)) is the Myosin motor domain. 161-168 (GESGAGKT) is a binding site for ATP. The segment at 632-654 (LYLLMETLNATTPHYVRCIKPND) is actin-binding. IQ domains follow at residues 756–779 (LRQSCVMVQKHMRGWLQRKKFLRE), 780–806 (RRAALIIQQYFRGQQTVRKAITAVALK), 807–829 (EAWAAIIIQKHCRGYLVRSLYQL), 830–854 (IRMATITMQAYSRGFLARRRYRKML), and 855–884 (EEHKAVILQKYARAWLARRRFQSIRRFVLN). Positions 884–1351 (NIQLTYRVQR…SKTIGKANDV (468 aa)) form a coiled coil. The Dilute domain maps to 1421–1697 (NSTINGIKQV…VRKVQALLNS (277 aa)).

This sequence belongs to the TRAFAC class myosin-kinesin ATPase superfamily. Myosin family. In terms of tissue distribution, expressed chiefly in non-neuronal tissues. Particularly abundant in epithelial and glandular tissues including pancreas, prostate, mammary, stomach, colon and lung.

Functionally, may be involved in transferrin trafficking. Likely to power actin-based membrane trafficking in many physiologically crucial tissues. The chain is Unconventional myosin-Vc (MYO5C) from Homo sapiens (Human).